A 653-amino-acid chain; its full sequence is 4-hydroxy-2,2'-bipyrrole-5-methanol synthase PigH (653 aa).

The region spanning 7–84 (ETYETLKQSV…DALDGILQRE (78 aa)) is the Carrier domain. Ser-45 carries the O-(pantetheine 4'-phosphoryl)serine modification. 354–355 (GY) is a pyridoxal 5'-phosphate binding site. Substrate is bound at residue His-379. Pyridoxal 5'-phosphate is bound by residues Ser-426, His-454, and Thr-482. An N6-(pyridoxal phosphate)lysine modification is found at Lys-485. The helical transmembrane segment at 512-532 (VFAATIPAPVAAGVIASIDVM) threads the bilayer.

Requires pyridoxal 5'-phosphate as cofactor.

It localises to the membrane. It participates in antibiotic biosynthesis; prodigiosin biosynthesis. In terms of biological role, involved in the biosynthesis of 4-methoxy-2,2'-bipyrrole-5-carbaldehyde (MBC), one of the terminal products involved in the biosynthesis of the red antibiotic prodigiosin (Pig). Carrier of the L-malonyl group (malonyl-S-PigH), which is decarboxylated by PigJ to yield a C2 carbanion acetyl-S-PigH. Then the pyrrolyl group of pyrrolyl-S-cysteinyl PigJ intermediate is captured by the C2 carbanion acetyl-S-PigH to yield the pyrrolyl-beta-ketoacyl-S-PigH. In the last step, PigH catalyzes the decarboxylative condensation between the pyrrolyl-beta-ketoacyl (pyrrolyl-beta-ketoacyl-S-PigH) and L-serine to yield 4-hydroxy-2,2'-bipyrrole-5-methanol (HBM). This chain is 4-hydroxy-2,2'-bipyrrole-5-methanol synthase PigH, found in Serratia sp. (strain ATCC 39006) (Prodigiosinella confusarubida).